We begin with the raw amino-acid sequence, 189 residues long: Small ribosomal subunit protein uS5 (189 aa).

The S5 DRBM domain maps to 22–85 (FVDKLVAINR…EAAKRELIFV (64 aa)).

Belongs to the universal ribosomal protein uS5 family. In terms of assembly, part of the 30S ribosomal subunit. Contacts proteins S4 and S8.

Its function is as follows. With S4 and S12 plays an important role in translational accuracy. Located at the back of the 30S subunit body where it stabilizes the conformation of the head with respect to the body. The sequence is that of Small ribosomal subunit protein uS5 from Rhizobium johnstonii (strain DSM 114642 / LMG 32736 / 3841) (Rhizobium leguminosarum bv. viciae).